Reading from the N-terminus, the 189-residue chain is Chitin synthase 2 (189 aa).

The protein belongs to the chitin synthase family. Class II subfamily.

It localises to the cell membrane. It carries out the reaction [(1-&gt;4)-N-acetyl-beta-D-glucosaminyl](n) + UDP-N-acetyl-alpha-D-glucosamine = [(1-&gt;4)-N-acetyl-beta-D-glucosaminyl](n+1) + UDP + H(+). Its function is as follows. Polymerizes chitin, a structural polymer of the cell wall and septum, by transferring the sugar moiety of UDP-GlcNAc to the non-reducing end of the growing chitin polymer. The protein is Chitin synthase 2 (CHS2) of Xylohypha bantiana.